The sequence spans 301 residues: Phospholipase A1 VesT1.02 (301 aa).

6 disulfides stabilise this stretch: C87–C294, C176–C245, C181–C262, C219–C228, C240–C246, and C267–C269. Residue S137 is the Nucleophile of the active site. Catalysis depends on D165, which acts as the Charge relay system. H230 (charge relay system) is an active-site residue.

This sequence belongs to the AB hydrolase superfamily. Lipase family. Is not glycosylated. In terms of tissue distribution, expressed by the venom gland.

It localises to the secreted. It catalyses the reaction a 1,2-diacyl-sn-glycero-3-phosphocholine + H2O = a 2-acyl-sn-glycero-3-phosphocholine + a fatty acid + H(+). In terms of biological role, catalyzes the hydrolysis of phosphatidylcholine with phospholipase A1 activity. Shows hemolytic activity. The polypeptide is Phospholipase A1 VesT1.02 (Vespa tropica (Greater banded hornet)).